Consider the following 356-residue polypeptide: Protein HEXIM1 (356 aa).

Basic and acidic residues-rich tracts occupy residues 1–11 (MAEPLLTEHQH) and 24–47 (VHEE…DSRW). The tract at residues 1 to 162 (MAEPLLTEHQ…RPSKKKRHWK (162 aa)) is disordered. A compositionally biased stretch (polar residues) spans 48-58 (QSRASLQSGSR). Residues 84-93 (SLEKGEKGQN) show a composition bias toward basic and acidic residues. Residues Ser98 and Ser103 each carry the phosphoserine modification. A compositionally biased stretch (basic residues) spans 145-162 (LGKKKHRRRPSKKKRHWK). The interval 147 to 174 (KKKHRRRPSKKKRHWKPYYKLTWEEKKK) is basic region; mediates nuclear localization and interaction with 7SK snRNA and NR3C1. Positions 199-202 (PYNT) are interaction with P-TEFb. Residues 207–247 (MDDHDQEEPDLKTGLYPKRAAAKSDDTSDEDFVEEAGEEDG) form an autoinhibitory acidic region; in absence of 7SK snRNA interacts with the basic region preventing interaction with P-TEFb and modulating subcellular localization region. A disordered region spans residues 210–259 (HDQEEPDLKTGLYPKRAAAKSDDTSDEDFVEEAGEEDGGSDGMGGDGSEF). The residue at position 230 (Ser230) is a Phosphoserine. At Thr233 the chain carries Phosphothreonine. Residues 233-248 (TSDEDFVEEAGEEDGG) are compositionally biased toward acidic residues. A phosphoserine mark is found at Ser234, Ser249, and Ser257. The stretch at 280–346 (SKQELIKEYL…LTENELHRQQ (67 aa)) forms a coiled coil. Positions 283-311 (ELIKEYLELEKCLSRKEDENNRLRLESKR) are mediates interaction with CCNT1. Residues 307–352 (LESKRLGGVDARVRELELELDRLRAENLQLLTENELHRQQERAPLS) are required for inhibition of ESR1-dependent transcription.

This sequence belongs to the HEXIM family. As to quaternary structure, homooligomer and heterooligomer with HEXIM2; probably dimeric. Core component of the 7SK RNP complex, at least composed of 7SK RNA, LARP7, MEPCE, HEXIM1 (or HEXIM2) and P-TEFb (composed of CDK9 and CCNT1/cyclin-T1). Interacts with the N-CoR complex through NCOR1. Interacts with ESR1 and NR3C1. May interact with NF-kappa-B through RELA. Interacts with CCNT2; mediates formation of a tripartite complex with KPNA2. Part of the HDP-RNP complex composed of at least HEXIM1, PRKDC, XRCC5, XRCC6, paraspeckle proteins (SFPQ, NONO, PSPC1, RBM14, and MATR3) and NEAT1 non-coding RNA. As to expression, widely expressed with higher expression in heart, skeletal muscle and brain (at protein level).

Its subcellular location is the nucleus. It is found in the cytoplasm. Transcriptional regulator which functions as a general RNA polymerase II transcription inhibitor. Core component of the 7SK RNP complex: in cooperation with 7SK snRNA sequesters P-TEFb in a large inactive 7SK snRNP complex preventing RNA polymerase II phosphorylation and subsequent transcriptional elongation. May also regulate NF-kappa-B, ESR1, NR3C1 and CIITA-dependent transcriptional activity. Plays a role in the regulation of DNA virus-mediated innate immune response by assembling into the HDP-RNP complex, a complex that serves as a platform for IRF3 phosphorylation and subsequent innate immune response activation through the cGAS-STING pathway. This Mus musculus (Mouse) protein is Protein HEXIM1 (Hexim1).